The sequence spans 440 residues: Light-independent protochlorophyllide reductase subunit N (440 aa).

3 residues coordinate [4Fe-4S] cluster: cysteine 15, cysteine 40, and cysteine 99.

This sequence belongs to the BchN/ChlN family. In terms of assembly, protochlorophyllide reductase is composed of three subunits; BchL, BchN and BchB. Forms a heterotetramer of two BchB and two BchN subunits. [4Fe-4S] cluster serves as cofactor.

The catalysed reaction is chlorophyllide a + oxidized 2[4Fe-4S]-[ferredoxin] + 2 ADP + 2 phosphate = protochlorophyllide a + reduced 2[4Fe-4S]-[ferredoxin] + 2 ATP + 2 H2O. Its pathway is porphyrin-containing compound metabolism; bacteriochlorophyll biosynthesis (light-independent). In terms of biological role, component of the dark-operative protochlorophyllide reductase (DPOR) that uses Mg-ATP and reduced ferredoxin to reduce ring D of protochlorophyllide (Pchlide) to form chlorophyllide a (Chlide). This reaction is light-independent. The NB-protein (BchN-BchB) is the catalytic component of the complex. The sequence is that of Light-independent protochlorophyllide reductase subunit N from Heliobacterium mobile (Heliobacillus mobilis).